The sequence spans 270 residues: 2-epi-5-epi-valiolone 7-phosphate 2-epimerase (270 aa).

Catalysis depends on proton donor/acceptor residues Glu-143 and Glu-236.

It belongs to the hyi family.

It carries out the reaction 2-epi-5-epi-valiolone 7-phosphate = 5-epi-valiolone 7-phosphate. Its function is as follows. Involved in the biosynthesis of the alpha-glucosidase inhibitor acarbose. Catalyzes the 2-epimerisation of 2-epi-5-epivaliolone 7-phosphate to yield 5-epi-valiolone 7-phosphate. This Actinoplanes sp. (strain ATCC 31044 / CBS 674.73 / SE50/110) protein is 2-epi-5-epi-valiolone 7-phosphate 2-epimerase (acbO).